Consider the following 131-residue polypeptide: 23S rRNA-specific endonuclease VapC20 (131 aa).

Residues 2–125 (IFVDTSFWAA…FDGDFSAAGF (124 aa)) form the PINc domain. Positions 5 and 98 each coordinate Mg(2+).

The protein belongs to the PINc/VapC protein family. The cofactor is Mg(2+).

Toxic component of a type II toxin-antitoxin (TA) system. An endoribonuclease that cleaves 23S rRNA in the sarcin-ricin loop (SRL). The SRL sequence is highly conserved and is implicated in GTP hydrolysis by EF-Tu and EF-G. Acts on purified ribosomes but not on isolated RNA. Its toxic effect is neutralized by coexpression with cognate antitoxin VapB20. In Mycobacterium tuberculosis (strain CDC 1551 / Oshkosh), this protein is 23S rRNA-specific endonuclease VapC20 (vapC20).